Here is a 711-residue protein sequence, read N- to C-terminus: MYWVLLCGSILLCCLSGASASPAKTKMYGKLPLVLTDACMGVLGEVTWEYSSDDLYSSPACTYEPALQSMLYCIYESLNEKGYSNRTFEKTFAAIKEDCAYYTDNLQNMTNADFYNMLNNGTTYIIQYSEGSANLTYPIEMDAQVRENYYYSYHGFYANYDIGHTYGGIICAYFVGVMILASILHYLSYTPFKTALFKQRLVRYVRRYLTIPTIWGKHASSFSYLKIFTGFLPTRSEGVIILGYLVLHTVFLAYGYQYDPYNLIFDSRREQIARYVADRSGVLAFAHFPLIALFAGRNNFLEFISGVKYTSFIMFHKWLGRMMFLDAVIHGAAYTSYSVFYKDWAASKEETYWQFGVAALCIVGVMVFFSLAMFRKFFYEAFLFLHIVLGALFFYTCWEHVVELSGIEWIYAAIAIWTIDRLIRIVRVSYFGFPKASLQLVGDDIIRVTVKRPVRLWKAKPGQYVFVSFLHHLYFWQSHPFTVLDSIIKDGELTIILKEKKGVTKLVKKYVCCNGGKASMRLAIEGPYGSSSPVNNYDNVLLLTGGTGLPGPIAHAIKLGKTSAATGKQFIKLVIAVRGFNVLEAYKPELMCLEDLNVQLHIYNTMEVPALTPNDSLEISQQDEKADGKGVVMATTLEQSPNPVEFDGTVFHHGRPNVEKLLHEVGDLNGSLAVVCCGPPVFVDEVRDQTANLVLEKPAKAIEYFEEYQSW.

A signal peptide spans 1–20 (MYWVLLCGSILLCCLSGASA). The Extracellular portion of the chain corresponds to 21–166 (SPAKTKMYGK…YANYDIGHTY (146 aa)). Residues Asn85, Asn108, Asn120, and Asn134 are each glycosylated (N-linked (GlcNAc...) asparagine). Residues 167–187 (GGIICAYFVGVMILASILHYL) form a helical membrane-spanning segment. The Cytoplasmic portion of the chain corresponds to 188–237 (SYTPFKTALFKQRLVRYVRRYLTIPTIWGKHASSFSYLKIFTGFLPTRSE). A helical transmembrane segment spans residues 238–258 (GVIILGYLVLHTVFLAYGYQY). At 259–280 (DPYNLIFDSRREQIARYVADRS) the chain is on the extracellular side. The 135-residue stretch at 280 to 414 (SGVLAFAHFP…SGIEWIYAAI (135 aa)) folds into the Ferric oxidoreductase domain. The helical transmembrane segment at 281-301 (GVLAFAHFPLIALFAGRNNFL) threads the bilayer. The Cytoplasmic segment spans residues 302-321 (EFISGVKYTSFIMFHKWLGR). Heme-binding residues include His316 and His330. A helical membrane pass occupies residues 322–341 (MMFLDAVIHGAAYTSYSVFY). At 342-353 (KDWAASKEETYW) the chain is on the extracellular side. The chain crosses the membrane as a helical span at residues 354-374 (QFGVAALCIVGVMVFFSLAMF). Residues 375 to 376 (RK) are Cytoplasmic-facing. A helical membrane pass occupies residues 377–397 (FFYEAFLFLHIVLGALFFYTC). His386 contributes to the heme binding site. Position 398 (Trp398) is a topological domain, extracellular. The chain crosses the membrane as a helical span at residues 399–419 (EHVVELSGIEWIYAAIAIWTI). Position 400 (His400) interacts with heme. The region spanning 415–534 (AIWTIDRLIR…EGPYGSSSPV (120 aa)) is the FAD-binding FR-type domain. The Cytoplasmic portion of the chain corresponds to 420-711 (DRLIRIVRVS…IEYFEEYQSW (292 aa)). An FAD-binding site is contributed by 479 to 485 (HPFTVLD). NADP(+) contacts are provided by residues 526–529 (GPYG) and 677–678 (CG).

The protein belongs to the ferric reductase (FRE) family. Requires FAD as cofactor. Heme is required as a cofactor.

Its subcellular location is the cell membrane. The enzyme catalyses 2 a Fe(II)-siderophore + NADP(+) + H(+) = 2 a Fe(III)-siderophore + NADPH. In terms of biological role, siderophore-iron reductase responsible for reducing extracellular iron prior to import. Catalyzes the reductive uptake of Fe(3+) bound to di- and trihydroxamate siderophores. Fe(3+) is reduced to Fe(2+), which then dissociates from the siderophore and can be imported by the high-affinity Fe(2+) transport complex in the plasma membrane. The sequence is that of Ferric reductase transmembrane component 3 (FRE3) from Saccharomyces cerevisiae (strain ATCC 204508 / S288c) (Baker's yeast).